The sequence spans 265 residues: Hydroxyethylthiazole kinase (265 aa).

A substrate-binding site is contributed by Met50. Residues Arg125 and Thr171 each contribute to the ATP site. Residue Gly198 participates in substrate binding.

The protein belongs to the Thz kinase family. Requires Mg(2+) as cofactor.

The enzyme catalyses 5-(2-hydroxyethyl)-4-methylthiazole + ATP = 4-methyl-5-(2-phosphooxyethyl)-thiazole + ADP + H(+). Its pathway is cofactor biosynthesis; thiamine diphosphate biosynthesis; 4-methyl-5-(2-phosphoethyl)-thiazole from 5-(2-hydroxyethyl)-4-methylthiazole: step 1/1. Its function is as follows. Catalyzes the phosphorylation of the hydroxyl group of 4-methyl-5-beta-hydroxyethylthiazole (THZ). This is Hydroxyethylthiazole kinase from Cronobacter sakazakii (strain ATCC BAA-894) (Enterobacter sakazakii).